We begin with the raw amino-acid sequence, 315 residues long: MPYQYHIQSNDDLVTPYQEVRAGFVALALERNRKATPFVEQARALKIRVSQIERPQDLLQMRDIRPTLLAASGVSDKAAGHLQEQDKVDAIEGLIQNFLEPAGENFVEELVYRFLLTRGDTLGGSMRNVGGILAERKFARYIISALTLSNTSYKWLDKNSKTWLNQPDDDTDIELRLRGLSWNLEGRNRTFIYNVNVPIVRKNIDICLFDCRQNEIEKNIISNPNIYIALGELKGGIDPAGADEHWKTANSALARIRTAFDRHSLKPYTFFVGSAIEKSMAEEIWHQLNSGILTNAANLTQPDQVASLCAWFIQL.

It catalyses the reaction Endonucleolytic cleavage of DNA to give specific double-stranded fragments with terminal 5'-phosphates.. A P subtype restriction enzyme that recognizes the double-stranded sequence 5'-CYCGRG-3' and cleaves after C-1. The sequence is that of Type II restriction enzyme AvaI from Anabaena variabilis.